Reading from the N-terminus, the 195-residue chain is Achaete-scute homolog 1b (195 aa).

The bHLH domain maps to 66 to 118; it reads MAVARRNERERNRVKQVNMGFQTLRQHVPNGAANKKMSKVETLRSAVEYIRAL. The tract at residues 141-164 is disordered; that stretch reads VSNAYSAGPESPHSAYSSDEGSYE.

As to quaternary structure, efficient DNA binding requires dimerization with another bHLH protein. In terms of tissue distribution, in the 24 hours embryo, expressed in hindbrain close to the anterior and posterior boundaries of rhombomeres 2-6 and in ventral cells close to the floor plate of most rhombomeres. Also expressed in the telencephalon, diencephalon, tegmentum and spinal cord at sites distinct from those expressing ascl1a. Not expressed in the adenohypophysis.

It localises to the nucleus. Its function is as follows. Transcriptional regulator. May mediate transcription activation by binding to the E box-containing promoter. Involved in neurogenesis. Involved in maintaining rhombomere boundaries in the hindbrain, probably via up-regulation of delta expression. May mediate transcription activation by binding to the E box-containing promoter. This chain is Achaete-scute homolog 1b, found in Danio rerio (Zebrafish).